Reading from the N-terminus, the 457-residue chain is Transcription factor PCF7 (457 aa).

Residues 58 to 84 (STLHYLLQEKERAQQAHEQLQIYQQQQ) are a coiled coil. The interval 95-121 (RQPASRGPGGGGGGGDGGGSSGESTPV) is disordered. The segment covering 101–115 (GPGGGGGGGDGGGSS) has biased composition (gly residues). Residues 140–198 (RKDRHSKVCTARGLRDRRVRLAAHTAIRFYDVQDRLGYDRPSKAVDWLMRNAKAAIDEL) enclose the TCP domain. Disordered stretches follow at residues 199–231 (PDRA…GFGN) and 263–299 (KSLF…SNQQ). Polar residues predominate over residues 212 to 230 (STEQPEGTEQANSTSYGFG). A compositionally biased stretch (low complexity) spans 268–278 (SSSTASGAASA).

As to quaternary structure, forms homodimers and heterodimers.

Its subcellular location is the nucleus. Its function is as follows. Transcription activator. Binds the promoter core sequence 5'-GGNCC-3'. This Oryza sativa subsp. indica (Rice) protein is Transcription factor PCF7 (PCF7).